The following is a 234-amino-acid chain: Polycomb group RING finger protein 5-A (234 aa).

Residues 18 to 57 (CSICRGYLIKPTAVTECLHTFCKSCIVQHFEESNECPECG) form an RING-type zinc finger. The tract at residues 97–130 (FWRKHKIKSNGEDGPRAKKSRLSGEDDDGNGGDY) is disordered.

Component of a PRC1-like complex.

Its subcellular location is the nucleus. In terms of biological role, component of Polycomb group (PcG) multiprotein complexes; the complex class is required to maintain the transcriptionally repressive state of some genes. The polypeptide is Polycomb group RING finger protein 5-A (Danio rerio (Zebrafish)).